The following is a 2358-amino-acid chain: Cell wall alpha-1,3-glucan synthase mok13 (2358 aa).

Residues 1645–1659 are compositionally biased toward basic and acidic residues; that stretch reads EGLENEENELKDKAP. The segment at 1645–1669 is disordered; that stretch reads EGLENEENELKDKAPPNEPNVGSLF.

Belongs to the glycosyltransferase group 1 family.

It catalyses the reaction [(1-&gt;3)-alpha-D-glucosyl](n) + UDP-alpha-D-glucose = [(1-&gt;3)-alpha-D-glucosyl](n+1) + UDP + H(+). The polypeptide is Cell wall alpha-1,3-glucan synthase mok13 (mok13) (Schizosaccharomyces pombe (strain 972 / ATCC 24843) (Fission yeast)).